The chain runs to 577 residues: MATDTAAPAAMKVDGSALAGRALAAAGARHMFGVVGIPVTSLASRAAAAGVRFLAFRNEQSAGYAAAAYGFLTGSPGLLLTVSGPGCVHGLAGLSHATANAWPLLMVSGSCSQPDAGRGDFQELDQIAATKPFIKIAVKATTIADIPRLVFQALAATVSGRPGGCYLDIPSDVLHQTLTESEAAALIDAAAADSAKSDSSPPKHKSLDEGIEKAAELLRRAERPLVVFGKGAAYSRAEDAIWKLVDTTGIPFLPTPMGKGVVPDTHPLSATAARSLAIGQCDVALVVGARLNWLLHFGEPPKWSKDVKFILVDVCEEEIELRKPHVGIVGDAKRVVELINREIKDQPFCLAPSHPWVEAITKKARDNVLKMEAQLAKDVVPFNFLTPLRIIRDAILAEGNPAPVVVSEGANTMDVGRAVLVQNEPRTRLDAGTWGTMGVGLGFCVAAAVAEPDRLVVAVEGDSGFGFSAMEVETLVRYQLPVVVIVFNNNGVYGGDRRSPDEITGPYKDDPAPTSFVPAAGYHKMMEAFGGKGYLVETPDELKSALSESFRARKPAVINVIIDPYAGAESGRMQHKN.

Thiamine diphosphate is bound at residue E59. A thiamine pyrophosphate binding region spans residues 412–493 (TMDVGRAVLV…VIVFNNNGVY (82 aa)). Positions 462 and 489 each coordinate Mg(2+).

It belongs to the TPP enzyme family. As to quaternary structure, homotetramer. Requires Mg(2+) as cofactor. The cofactor is thiamine diphosphate.

The enzyme catalyses an (R)-2-hydroxy-long-chain-fatty acyl-CoA = a long-chain fatty aldehyde + formyl-CoA. The catalysed reaction is a 2-hydroxy-3-methyl fatty acyl-CoA = a 2-methyl-branched fatty aldehyde + formyl-CoA. In terms of biological role, catalyzes a carbon-carbon cleavage reaction; cleaves a 2-hydroxy-3-methylacyl-CoA into formyl-CoA and a 2-methyl-branched fatty aldehyde. This Oryza sativa subsp. japonica (Rice) protein is 2-hydroxyacyl-CoA lyase.